The sequence spans 428 residues: Phosphoribosylamine--glycine ligase (428 aa).

Residues 109–316 form the ATP-grasp domain; the sequence is KDFLARHNIP…LVELCLAGTQ (208 aa). Residue 135–196 participates in ATP binding; that stretch reads VRQKGAPIVI…EEFLDGEEAS (62 aa). Mg(2+) is bound by residues glutamate 286 and asparagine 288.

This sequence belongs to the GARS family. Requires Mg(2+) as cofactor. The cofactor is Mn(2+).

It carries out the reaction 5-phospho-beta-D-ribosylamine + glycine + ATP = N(1)-(5-phospho-beta-D-ribosyl)glycinamide + ADP + phosphate + H(+). Its pathway is purine metabolism; IMP biosynthesis via de novo pathway; N(1)-(5-phospho-D-ribosyl)glycinamide from 5-phospho-alpha-D-ribose 1-diphosphate: step 2/2. The chain is Phosphoribosylamine--glycine ligase from Yersinia pestis.